Reading from the N-terminus, the 1355-residue chain is Ecdysone-induced protein 75B, isoform A (1355 aa).

Disordered regions lie at residues 60–91, 126–228, 248–268, and 308–344; these read QHQP…QQHS, RLKN…DSSY, ELEQ…EAKP, and ATQQ…NSSA. Over residues 66 to 76 the composition is skewed to basic residues; sequence QLHHQHQHQHQ. Composition is skewed to low complexity over residues 77 to 91 and 143 to 179; these read HQQQ…QQHS and TLVK…QHQQ. Acidic residues predominate over residues 200–213; sequence SGIDEDSPNSDEDC. Composition is skewed to polar residues over residues 218–228 and 254–264; these read PAGTSLEDSSY and TTGGSNAQQQV. Low complexity-rich tracts occupy residues 308–321 and 330–344; these read ATQQ…QHQH and DSNC…NSSA. Residues 384-474 constitute a DNA-binding region (nuclear receptor); that stretch reads SQLNYLCQKF…VGMSRDAVRF (91 aa). The NR C4-type; degenerate zinc-finger motif lies at 387–421; that stretch reads NYLCQKFDEKLDTALSNSSANTGRNTPAVTANEDA. The segment at 438-457 adopts an NR C4-type zinc-finger fold; the sequence is CTKNQQCSILRINRNRCQYC. The NR LBD domain occupies 508–756; that stretch reads DQPRLLAAVL…QQMWSMEDGN (249 aa). Disordered regions lie at residues 780 to 821, 927 to 964, 987 to 1007, 1051 to 1117, 1147 to 1260, and 1312 to 1344; these read KSPL…SALA, LDSP…SVDD, VSVS…KRQI, AEAD…SSHS, ENST…SNSA, and TVTA…NPGL. Low complexity-rich tracts occupy residues 797 to 809, 948 to 960, 987 to 1001, 1053 to 1098, and 1106 to 1117; these read GSPS…GVSL, SSGG…SPRS, VSVS…STSS, ADAS…AQSQ, and SSPKASMASSHS. Composition is skewed to polar residues over residues 1149 to 1162 and 1174 to 1196; these read STAA…VGNR and AVQN…QRQQ. Low complexity-rich tracts occupy residues 1197–1233, 1242–1260, and 1315–1343; these read SVSP…SASS, STSN…SNSA, and ASNG…PNPG.

This sequence belongs to the nuclear hormone receptor family. NR1 subfamily.

It is found in the nucleus. In terms of biological role, implicated in the regulation of ecdysone-triggered gene hierarchies. Probably plays a key role in mediating the regulation of the larval molt by 20-OH-ecdysone. The protein is Ecdysone-induced protein 75B, isoform A (Eip75B) of Drosophila melanogaster (Fruit fly).